Here is a 306-residue protein sequence, read N- to C-terminus: Curved DNA-binding protein (306 aa).

Positions 5-69 (DYYAIMGVKP…QRRAEYDQMW (65 aa)) constitute a J domain.

It localises to the cytoplasm. Its subcellular location is the nucleoid. In terms of biological role, DNA-binding protein that preferentially recognizes a curved DNA sequence. It is probably a functional analog of DnaJ; displays overlapping activities with DnaJ, but functions under different conditions, probably acting as a molecular chaperone in an adaptive response to environmental stresses other than heat shock. Lacks autonomous chaperone activity; binds native substrates and targets them for recognition by DnaK. Its activity is inhibited by the binding of CbpM. The chain is Curved DNA-binding protein from Escherichia fergusonii (strain ATCC 35469 / DSM 13698 / CCUG 18766 / IAM 14443 / JCM 21226 / LMG 7866 / NBRC 102419 / NCTC 12128 / CDC 0568-73).